A 76-amino-acid chain; its full sequence is Omega-scoloptoxin(13)-Ssm2a (76 aa).

The N-terminal stretch at 1 to 22 is a signal peptide; the sequence is MAYIYALIFAIVVCMNTDVIQA.

Contains 4 disulfide bonds. In terms of tissue distribution, expressed by the venom gland.

The protein localises to the secreted. Functionally, inhibits voltage-gated calcium channel (Cav) currents in DRG neurons (IC(50)=1590 nM). The chain is Omega-scoloptoxin(13)-Ssm2a from Scolopendra mutilans (Chinese red-headed centipede).